The following is a 258-amino-acid chain: MTGLLNGKVVAITGGVTGIGRAIAIEMARNGAKVVVNHLPSEEQAQLAKELKEEISDGENNVLTIPGDISLPETGRRIVELAVEKFGEINVFVSNAGVCGFREFLEITPETLFQTVNINLNGAFFAIQAAAQQMVKQGKGGSIIGISSISALVGGAHQTHYTPTKAGILSLMQSTACALGKYGIRCNAILPGTISTALNEEDLKDPEKRKYMEGRIPLGRVGDPKDIAGPAIFLASDMSNYVNGAQLLVDGGLFVNLQ.

Positions 19, 68, and 95 each coordinate NADP(+). Residues Ser-147 and Tyr-161 each act as proton donor in the active site. Tyr-161, Lys-165, Ile-194, and Thr-196 together coordinate NADP(+). Lys-165 acts as the Lowers pKa of active site Tyr in catalysis.

The protein belongs to the short-chain dehydrogenases/reductases (SDR) family.

It carries out the reaction L-rhamnofuranose + NAD(+) = L-rhamnono-1,4-lactone + NADH + H(+). In terms of biological role, NAD-dependent dehydrogenase that has high activity with L-rhamnose and L-lyxose, and shows only low activity with L-mannose. Has no activity with NADP. Catalyzes the first step in an alternative pathway for rhamnose utilization that does not involve phosphorylated intermediates. This is L-rhamnose-1-dehydrogenase (DHG2) from Scheffersomyces stipitis (strain ATCC 58785 / CBS 6054 / NBRC 10063 / NRRL Y-11545) (Yeast).